A 462-amino-acid polypeptide reads, in one-letter code: TNF receptor-associated factor family protein DDB_G0267754 (462 aa).

The RING-type; degenerate zinc finger occupies 24–62; it reads CCVCECLLIEALQCRNGHVACKNCFIKIVKSKKECMTCR. Residues 104–127 are disordered; sequence KNGNGNEGSSANEIEQPQQPQQQQ. TRAF-type zinc fingers lie at residues 150-217 and 214-273; these read SHLK…SHTE and SHTE…NQLA. The MATH domain occupies 326 to 449; that stretch reads MFRGKWVISN…NDTLTINFSI (124 aa).

This sequence belongs to the TNF receptor-associated factor family. A subfamily.

It is found in the cytoplasm. Probable adapter protein and signal transducer that links members of the tumor necrosis factor receptor family to different signaling pathways by association with the receptor cytoplasmic domain and kinases. This Dictyostelium discoideum (Social amoeba) protein is TNF receptor-associated factor family protein DDB_G0267754.